We begin with the raw amino-acid sequence, 298 residues long: Zinc import ATP-binding protein ZnuC (298 aa).

Residues I17 to R232 form the ABC transporter domain. G49–S56 lines the ATP pocket. Residues R273 to A298 form a disordered region. Basic and acidic residues predominate over residues C276 to A298.

This sequence belongs to the ABC transporter superfamily. Zinc importer (TC 3.A.1.15.5) family. As to quaternary structure, the complex is composed of two ATP-binding proteins (ZnuC), two transmembrane proteins (ZnuB) and a solute-binding protein (ZnuA).

It is found in the cell inner membrane. The catalysed reaction is Zn(2+)(out) + ATP(in) + H2O(in) = Zn(2+)(in) + ADP(in) + phosphate(in) + H(+)(in). Part of the ABC transporter complex ZnuABC involved in zinc import. Responsible for energy coupling to the transport system. This chain is Zinc import ATP-binding protein ZnuC, found in Brucella suis biovar 1 (strain 1330).